A 382-amino-acid polypeptide reads, in one-letter code: Adenosine 3'-phospho 5'-phosphosulfate transporter 2 (382 aa).

The segment covering 1 to 10 has biased composition (polar residues); that stretch reads MSVSNRNGNG. The tract at residues 1–33 is disordered; sequence MSVSNRNGNGSEVIYVGDRSTNRPPRNAPSPDE. 10 helical membrane-spanning segments follow: residues 56-76, 83-103, 121-141, 144-164, 170-190, 197-217, 234-254, 271-291, 299-319, and 323-343; these read LCCA…ELIF, PYGW…GYVE, VLLA…LGYL, PTQV…SILI, GPLD…FTLA, NFNP…AAIG, VVIY…LLTG, FGYA…VLTL, LAAT…FVFF, and FTIN…LNVY.

This sequence belongs to the nucleotide-sugar transporter family. SLC35B subfamily.

The protein resides in the golgi apparatus membrane. Functionally, mediates the transport of adenosine 3'-phospho 5'-phosphosulfate (PAPS), from cytosol into Golgi. PAPS is a universal sulfuryl donor for sulfation events that take place in the Golgi. Essential for viability. Involved in glycosaminoglycan synthesis and the subsequent signaling. May be involved in hh and dpp signaling by controlling the sulfation of heparan sulfate (HS). This is Adenosine 3'-phospho 5'-phosphosulfate transporter 2 from Aedes aegypti (Yellowfever mosquito).